A 463-amino-acid polypeptide reads, in one-letter code: Cysteine--tRNA ligase (463 aa).

Cys-29 serves as a coordination point for Zn(2+). Residues 31 to 41 (PTVYDFAHIGN) carry the 'HIGH' region motif. Residues Cys-227, His-252, and Glu-256 each coordinate Zn(2+). A 'KMSKS' region motif is present at residues 285-289 (KMSKS). ATP is bound at residue Lys-288.

Belongs to the class-I aminoacyl-tRNA synthetase family. Monomer. The cofactor is Zn(2+).

Its subcellular location is the cytoplasm. It carries out the reaction tRNA(Cys) + L-cysteine + ATP = L-cysteinyl-tRNA(Cys) + AMP + diphosphate. The sequence is that of Cysteine--tRNA ligase from Rhodopseudomonas palustris (strain BisB5).